A 145-amino-acid chain; its full sequence is MYPAHLLLLLAVCVSLLGASAIPPLPLNLIQFTYLIECANKGRRTSFNYADYGCYCGIGGSGTPVDKLDRCCKTHDECYAQAEKKGCYPKLTMYNYYCGEGGPYCNSKTECQRFVCDCDVRAADCFARYPYNNKNYNINTSKRCK.

Residues 1 to 21 (MYPAHLLLLLAVCVSLLGASA) form the signal peptide. A propeptide spanning residues 22–27 (IPPLPL) is cleaved from the precursor. 7 disulfide bridges follow: Cys-38/Cys-98, Cys-54/Cys-144, Cys-56/Cys-72, Cys-71/Cys-125, Cys-78/Cys-118, Cys-87/Cys-111, and Cys-105/Cys-116. Ca(2+)-binding residues include Tyr-55, Gly-57, and Gly-59. The active site involves His-75. Asp-76 lines the Ca(2+) pocket. Asp-119 is an active-site residue.

It belongs to the phospholipase A2 family. Group I subfamily. D49 sub-subfamily. Requires Ca(2+) as cofactor.

It is found in the secreted. It catalyses the reaction a 1,2-diacyl-sn-glycero-3-phosphocholine + H2O = a 1-acyl-sn-glycero-3-phosphocholine + a fatty acid + H(+). PLA2 catalyzes the calcium-dependent hydrolysis of the 2-acyl groups in 3-sn-phosphoglycerides. This Laticauda laticaudata (Blue-ringed sea krait) protein is Basic phospholipase A2 PC17.